The following is a 611-amino-acid chain: Aspartate--tRNA ligase, mitochondrial (611 aa).

Residues 1–30 constitute a mitochondrion transit peptide; that stretch reads MVLSRLPACLLPLVGTKVSIQGWLVATSRQ. E192 is an L-aspartate binding site. The segment at 216 to 219 is aspartate; that stretch reads QQYK. An L-aspartate-binding site is contributed by R238. ATP contacts are provided by residues 238–240 and E502; that span reads RDE. L-aspartate is bound at residue R509. Residue 554–557 participates in ATP binding; sequence GFDR.

This sequence belongs to the class-II aminoacyl-tRNA synthetase family. Type 1 subfamily.

The protein resides in the mitochondrion. The enzyme catalyses tRNA(Asp) + L-aspartate + ATP = L-aspartyl-tRNA(Asp) + AMP + diphosphate. This is Aspartate--tRNA ligase, mitochondrial (msd1) from Schizosaccharomyces pombe (strain 972 / ATCC 24843) (Fission yeast).